The following is a 143-amino-acid chain: Transcriptional regulator MraZ (143 aa).

SpoVT-AbrB domains are found at residues Glu5 to Glu47 and Ala76 to Leu119.

It belongs to the MraZ family. As to quaternary structure, forms oligomers.

It is found in the cytoplasm. The protein resides in the nucleoid. The sequence is that of Transcriptional regulator MraZ from Desulfitobacterium hafniense (strain Y51).